We begin with the raw amino-acid sequence, 119 residues long: Protein TusC (119 aa).

The protein belongs to the DsrF/TusC family. In terms of assembly, heterohexamer, formed by a dimer of trimers. The hexameric TusBCD complex contains 2 copies each of TusB, TusC and TusD. The TusBCD complex interacts with TusE.

The protein resides in the cytoplasm. Its function is as follows. Part of a sulfur-relay system required for 2-thiolation of 5-methylaminomethyl-2-thiouridine (mnm(5)s(2)U) at tRNA wobble positions. In Escherichia fergusonii (strain ATCC 35469 / DSM 13698 / CCUG 18766 / IAM 14443 / JCM 21226 / LMG 7866 / NBRC 102419 / NCTC 12128 / CDC 0568-73), this protein is Protein TusC.